We begin with the raw amino-acid sequence, 65 residues long: Toxin NaTx-22 (65 aa).

The region spanning 1 to 64 is the LCN-type CS-alpha/beta domain; it reads KDGYPVIKTT…TYPIPGKTCK (64 aa). 4 disulfide bridges follow: C12–C63, C16–C39, C25–C44, and C29–C46.

It belongs to the long (4 C-C) scorpion toxin superfamily. Sodium channel inhibitor family. In terms of tissue distribution, expressed by the venom gland.

The protein localises to the secreted. In terms of biological role, probable sodium channel inhibitor. This chain is Toxin NaTx-22, found in Centruroides sculpturatus (Arizona bark scorpion).